Reading from the N-terminus, the 319-residue chain is Ribonuclease Z (319 aa).

7 residues coordinate Zn(2+): histidine 62, histidine 64, aspartate 66, histidine 67, histidine 139, aspartate 209, and histidine 268. Catalysis depends on aspartate 66, which acts as the Proton acceptor.

This sequence belongs to the RNase Z family. In terms of assembly, homodimer. Zn(2+) serves as cofactor.

The catalysed reaction is Endonucleolytic cleavage of RNA, removing extra 3' nucleotides from tRNA precursor, generating 3' termini of tRNAs. A 3'-hydroxy group is left at the tRNA terminus and a 5'-phosphoryl group is left at the trailer molecule.. Functionally, zinc phosphodiesterase, which displays some tRNA 3'-processing endonuclease activity. Probably involved in tRNA maturation, by removing a 3'-trailer from precursor tRNA. The protein is Ribonuclease Z of Pseudomonas putida (strain ATCC 700007 / DSM 6899 / JCM 31910 / BCRC 17059 / LMG 24140 / F1).